Consider the following 436-residue polypeptide: Tubulin epsilon and delta complex protein 2 (436 aa).

Disordered regions lie at residues 53–76 (ARTP…PSSQ) and 94–191 (VRKG…PSSA). The span at 111–131 (TSKAATSGAAAASHPRAPSRG) shows a compositional bias: low complexity. Over residues 153–170 (DYPEHRLRSKGDKTHVRT) the composition is skewed to basic and acidic residues. At serine 161 the chain carries Phosphoserine.

Interacts with TEDC1. Found in a complex with TEDC1, TEDC2, TUBE1 and TUBD1.

The protein localises to the cell projection. Its subcellular location is the cilium. The protein resides in the cytoplasm. It localises to the cytoskeleton. It is found in the microtubule organizing center. The protein localises to the centrosome. Its subcellular location is the centriole. Its function is as follows. Acts as a positive regulator of ciliary hedgehog signaling. Required for centriole stability. In Mus musculus (Mouse), this protein is Tubulin epsilon and delta complex protein 2.